Consider the following 160-residue polypeptide: 6,7-dimethyl-8-ribityllumazine synthase (160 aa).

5-amino-6-(D-ribitylamino)uracil is bound by residues tryptophan 27, 59 to 61, and 81 to 83; these read AIE and VVI. Position 86-87 (86-87) interacts with (2S)-2-hydroxy-3-oxobutyl phosphate; the sequence is ET. Histidine 89 serves as the catalytic Proton donor. Position 114 (asparagine 114) interacts with 5-amino-6-(D-ribitylamino)uracil. Arginine 128 serves as a coordination point for (2S)-2-hydroxy-3-oxobutyl phosphate.

This sequence belongs to the DMRL synthase family. Homopentamer.

The enzyme catalyses (2S)-2-hydroxy-3-oxobutyl phosphate + 5-amino-6-(D-ribitylamino)uracil = 6,7-dimethyl-8-(1-D-ribityl)lumazine + phosphate + 2 H2O + H(+). Its pathway is cofactor biosynthesis; riboflavin biosynthesis; riboflavin from 2-hydroxy-3-oxobutyl phosphate and 5-amino-6-(D-ribitylamino)uracil: step 1/2. Its function is as follows. Catalyzes the formation of 6,7-dimethyl-8-ribityllumazine by condensation of 5-amino-6-(D-ribitylamino)uracil with 3,4-dihydroxy-2-butanone 4-phosphate. This is the penultimate step in the biosynthesis of riboflavin. In Mycobacterium ulcerans (strain Agy99), this protein is 6,7-dimethyl-8-ribityllumazine synthase.